Here is a 312-residue protein sequence, read N- to C-terminus: Methionyl-tRNA formyltransferase (312 aa).

Residue 112 to 115 participates in (6S)-5,6,7,8-tetrahydrofolate binding; sequence SLLP.

The protein belongs to the Fmt family.

It catalyses the reaction L-methionyl-tRNA(fMet) + (6R)-10-formyltetrahydrofolate = N-formyl-L-methionyl-tRNA(fMet) + (6S)-5,6,7,8-tetrahydrofolate + H(+). Its function is as follows. Attaches a formyl group to the free amino group of methionyl-tRNA(fMet). The formyl group appears to play a dual role in the initiator identity of N-formylmethionyl-tRNA by promoting its recognition by IF2 and preventing the misappropriation of this tRNA by the elongation apparatus. This is Methionyl-tRNA formyltransferase from Syntrophus aciditrophicus (strain SB).